Reading from the N-terminus, the 154-residue chain is Terephthalate 1,2-dioxygenase, terminal oxygenase component subunit beta 1 (154 aa).

Belongs to the bacterial ring-hydroxylating dioxygenase beta subunit family. In terms of assembly, heterotetramer composed of 2 alpha (TphA2I and TphA2II) and 2 beta (TphA3I and TphA3II) subunits. Part of a multicomponent enzyme system composed of a reductase (TphA1I or TphA1II) and a two-subunit oxygenase component (TphA2I or TphA2II and TphA3I or TphA3II). It depends on Fe cation as a cofactor.

It carries out the reaction terephthalate + NADH + O2 + H(+) = (3S,4R)-3,4-dihydroxycyclohexa-1,5-diene-1,4-dicarboxylate + NAD(+). Its activity is regulated as follows. Inhibited by EDTA. Component of the terephthalate 1,2-dioxygenase multicomponent enzyme system which catalyzes the dioxygenation of terephthalate (TER/TPA) to 1,2-dihydroxy-3,5-cyclohexadiene-1,4-dicarboxylic acid (DCD). It can also use 2,5-dicarboxypyridine (PDC) and 1,4-napthalenedicarboxylic acid (NDC) as substrates, and preferentially uses NADPH which is the physiological electron donor. The chain is Terephthalate 1,2-dioxygenase, terminal oxygenase component subunit beta 1 (tphA3I) from Comamonas sp.